The sequence spans 142 residues: Crustacean hyperglycemic hormones (142 aa).

Positions 1–26 are cleaved as a signal peptide; it reads MYSKTIPAMLAIITVAYLCALPHAHA. The residue at position 67 (glutamine 67) is a Pyrrolidone carboxylic acid; partial. 3 disulfides stabilise this stretch: cysteine 73–cysteine 109, cysteine 89–cysteine 105, and cysteine 92–cysteine 118. Valine 138 bears the Valine amide mark.

This sequence belongs to the arthropod CHH/MIH/GIH/VIH hormone family. The N-terminus is blocked only in isoform CHH-II but not in isoform CHH-I. Produced by the medulla terminalis X-organ in the eyestalks and transported to the sinus gland where they are stored and released.

The protein localises to the secreted. In terms of biological role, hormone found in the sinus gland of isopods and decapods which controls the blood sugar level. Has a secretagogue action over the amylase released from the midgut gland. May act as a stress hormone and may be involved in the control of molting and reproduction. The polypeptide is Crustacean hyperglycemic hormones (Carcinus maenas (Common shore crab)).